Reading from the N-terminus, the 333-residue chain is MKLGRAALALLLLAPCVVRAVEPISLSLALAGVLTTYISYPRLYCLFAECCGQMRSLSREALQKDLDNKLFGQHLAKKVILNAVSGFLSNPKPKKPLTLSLHGWTGTGKNFASKIIAENIYEGGLNSDYVHLFVATLHFPHASNITQYKDQLQMWIRGNVSACARSIFIFDEMDKMHAGLIDAIKPFLDYYDVVDEVSYQKAIFIFLSNAGAERITDVALDFWKSGKQREEIKLRDMEPALAVSVFNNKNSGFWHSSLIDRNLIDYFVPFLPLEYKHLKMCIRVEMQSRGYEVDEDIISKVAEEMTFFPKEEKVFSDKGCKTVFTKLDYYLDD.

The signal sequence occupies residues 1 to 20 (MKLGRAALALLLLAPCVVRA). Residues 92 to 252 (KPKKPLTLSL…VSVFNNKNSG (161 aa)) form an interaction with SNAPIN region. An ATP-binding site is contributed by 103 to 110 (GWTGTGKN). 2 N-linked (GlcNAc...) asparagine glycosylation sites follow: N144 and N159. The interval 252-333 (GFWHSSLIDR…FTKLDYYLDD (82 aa)) is interaction with KLC1. Positions 313–333 (KVFSDKGCKTVFTKLDYYLDD) are interaction with SYNE3.

This sequence belongs to the ClpA/ClpB family. Torsin subfamily. Homohexamer. Interacts with TOR1B; the interaction may be specific of neural tissues. Interacts (ATP-bound) with TOR1AIP1 and TOR1AIP2; the interactions induce ATPase activity. Interacts with KLHL14; preferentially when ATP-free. Interacts with KLC1 (via TPR repeats); the interaction associates TOR1A with the kinesin oligomeric complex. Interacts with COPS4; the interaction associates TOR1A with the CSN complex. Interacts with SNAPIN; the interaction is direct and associates SNAPIN with the CSN complex. Interacts with STON2. Interacts (ATP-bound) with SYNE3 (via KASH domain); the interaction is required for SYNE3 nuclear envelope localization. Interacts with VIM; the interaction associates TOR1A with the cytoskeleton. Interacts with PLEC. Interacts (ATP-bound) with SLC6A3; regulates SLC6A3 transport to the plasma membrane. In terms of processing, N-glycosylated. In terms of tissue distribution, widely expressed (at protein level).

It localises to the endoplasmic reticulum lumen. The protein localises to the nucleus membrane. It is found in the cell projection. Its subcellular location is the growth cone. The protein resides in the cytoplasmic vesicle membrane. It localises to the synapse. The protein localises to the synaptosome. It is found in the cytoplasm. Its subcellular location is the cytoskeleton. The protein resides in the cytoplasmic vesicle. It localises to the secretory vesicle. The protein localises to the synaptic vesicle. The enzyme catalyses ATP + H2O = ADP + phosphate + H(+). Its function is as follows. Protein with chaperone functions important for the control of protein folding, processing, stability and localization as well as for the reduction of misfolded protein aggregates. Involved in the regulation of synaptic vesicle recycling, controls STON2 protein stability in collaboration with the COP9 signalosome complex (CSN). In the nucleus, may link the cytoskeleton with the nuclear envelope, this mechanism seems to be crucial for the control of nuclear polarity, cell movement and, specifically in neurons, nuclear envelope integrity. Participates in the cellular trafficking and may regulate the subcellular location of multipass membrane proteins such as the dopamine transporter SLC6A3, leading to the modulation of dopamine neurotransmission. In the endoplasmic reticulum, plays a role in the quality control of protein folding by increasing clearance of misfolded proteins such as SGCE variants or holding them in an intermediate state for proper refolding. May have a redundant function with TOR1B in non-neural tissues. In Mus musculus (Mouse), this protein is Torsin-1A (Tor1a).